Here is a 196-residue protein sequence, read N- to C-terminus: Adenylate kinase (196 aa).

9-17 (GIPGVGKST) provides a ligand contact to ATP.

This sequence belongs to the archaeal adenylate kinase family.

It is found in the cytoplasm. The catalysed reaction is AMP + ATP = 2 ADP. The sequence is that of Adenylate kinase (adkA) from Pyrococcus horikoshii (strain ATCC 700860 / DSM 12428 / JCM 9974 / NBRC 100139 / OT-3).